Consider the following 348-residue polypeptide: Rhodopsin (348 aa).

Residues 1–33 (TEGPYFYIPMVNTTGIVRSPYEYPQYYLVNPAA) lie on the Extracellular side of the membrane. N-linked (GlcNAc...) asparagine glycosylation is present at asparagine 12. Residues 34–58 (YAMLGAYMFFLIIVGFPVNFMTLYV) traverse the membrane as a helical segment. Residues 59 to 70 (TLEHKKLRTPLN) are Cytoplasmic-facing. Residues 71–93 (YILLNLAVADLFMVIGGFTTTIY) form a helical membrane-spanning segment. At 94–107 (TSMHGYFVLGRLGC) the chain is on the extracellular side. Cysteines 107 and 184 form a disulfide. Residues 108–130 (NIEGFFATLGGMISLWSLAVLAI) form a helical membrane-spanning segment. A 'Ionic lock' involved in activated form stabilization motif is present at residues 131–133 (ERW). The Cytoplasmic segment spans residues 131 to 149 (ERWVVVCKPISNFRFGENH). Residues 150 to 170 (AIMGVSLTWAMALACTVPPLV) form a helical membrane-spanning segment. Residues 171–199 (GWSRYIPEGMQCSCGIDYYTRAEGFNNES) are Extracellular-facing. A glycan (N-linked (GlcNAc...) asparagine) is linked at asparagine 197. Residues 200 to 221 (FVLYMFFCHFTIPLTIIFFCYG) form a helical membrane-spanning segment. Residues 222 to 249 (RLLCAVKEAAAAQQESETTQRAEREVTR) are Cytoplasmic-facing. The helical transmembrane segment at 250–271 (MVIIMVIGFLICWLPYASVAWF) threads the bilayer. At 272–283 (IFTHQGSEFGPL) the chain is on the extracellular side. A helical transmembrane segment spans residues 284 to 305 (FMTIPAFFAKSSSIYNPMIYIC). The residue at position 293 (lysine 293) is an N6-(retinylidene)lysine. The Cytoplasmic portion of the chain corresponds to 306–348 (MNKQFRHCMITTLFCGKNPFEGEEEGASSTKTEASSASSVSPA). Cysteine 320 carries S-palmitoyl cysteine lipidation. The tract at residues 327–348 (GEEEGASSTKTEASSASSVSPA) is disordered. Low complexity predominate over residues 332–348 (ASSTKTEASSASSVSPA).

This sequence belongs to the G-protein coupled receptor 1 family. Opsin subfamily. Phosphorylated on some or all of the serine and threonine residues present in the C-terminal region. In terms of processing, contains one covalently linked retinal chromophore.

The protein localises to the membrane. The protein resides in the cell projection. Its subcellular location is the cilium. It localises to the photoreceptor outer segment. Photoreceptor required for image-forming vision at low light intensity. While most salt water fish species use retinal as chromophore, most freshwater fish use 3-dehydroretinal, or a mixture of retinal and 3-dehydroretinal. Light-induced isomerization of 11-cis to all-trans retinal triggers a conformational change that activates signaling via G-proteins. Subsequent receptor phosphorylation mediates displacement of the bound G-protein alpha subunit by arrestin and terminates signaling. This is Rhodopsin (rho) from Sargocentron microstoma (Smallmouth squirrelfish).